Here is a 339-residue protein sequence, read N- to C-terminus: DNA-directed RNA polymerase subunit alpha (339 aa).

Residues 1-233 (MVREEVAGST…DLFLPFLHAE (233 aa)) form an alpha N-terminal domain (alpha-NTD) region. The interval 264-339 (KKGIPLNCIF…IDLLKNKLSF (76 aa)) is alpha C-terminal domain (alpha-CTD).

Belongs to the RNA polymerase alpha chain family. As to quaternary structure, in plastids the minimal PEP RNA polymerase catalytic core is composed of four subunits: alpha, beta, beta', and beta''. When a (nuclear-encoded) sigma factor is associated with the core the holoenzyme is formed, which can initiate transcription.

Its subcellular location is the plastid. The protein resides in the chloroplast. The enzyme catalyses RNA(n) + a ribonucleoside 5'-triphosphate = RNA(n+1) + diphosphate. In terms of biological role, DNA-dependent RNA polymerase catalyzes the transcription of DNA into RNA using the four ribonucleoside triphosphates as substrates. In Thinopyrum bessarabicum (Wheatgrass), this protein is DNA-directed RNA polymerase subunit alpha.